The primary structure comprises 205 residues: MNDNREQLTQQIIDAGRFLYGRGWSPATSSNYSARLDEGRALLTVSGRHKGQLGFDDVLATDLAGNSLEPGKKPSAETLLHTQLYAWSPAIGAVLHTHSVNATVLSRLVRGDRLVLQDYELQKAFAGVTTHEGQVEVPIFDNDQDIARLAGRVQPWLEAHPDCPGYLIRGHGLYTWGARMSDALRQVEAFEFLFECELKVLSLSR.

The Zn(2+) site is built by His-96 and His-98.

Belongs to the aldolase class II family. MtnB subfamily. Zn(2+) is required as a cofactor.

It catalyses the reaction 5-(methylsulfanyl)-D-ribulose 1-phosphate = 5-methylsulfanyl-2,3-dioxopentyl phosphate + H2O. The protein operates within amino-acid biosynthesis; L-methionine biosynthesis via salvage pathway; L-methionine from S-methyl-5-thio-alpha-D-ribose 1-phosphate: step 2/6. Functionally, catalyzes the dehydration of methylthioribulose-1-phosphate (MTRu-1-P) into 2,3-diketo-5-methylthiopentyl-1-phosphate (DK-MTP-1-P). This is Methylthioribulose-1-phosphate dehydratase from Pseudomonas paraeruginosa (strain DSM 24068 / PA7) (Pseudomonas aeruginosa (strain PA7)).